Consider the following 39-residue polypeptide: Cytochrome b6-f complex subunit 5 (39 aa).

Residues 5-25 form a helical membrane-spanning segment; it reads LLCGIVLGLVPVTLLGLFVSA.

It belongs to the PetG family. As to quaternary structure, the 4 large subunits of the cytochrome b6-f complex are cytochrome b6, subunit IV (17 kDa polypeptide, PetD), cytochrome f and the Rieske protein, while the 4 small subunits are PetG, PetL, PetM and PetN. The complex functions as a dimer.

It localises to the cellular thylakoid membrane. Functionally, component of the cytochrome b6-f complex, which mediates electron transfer between photosystem II (PSII) and photosystem I (PSI), cyclic electron flow around PSI, and state transitions. PetG is required for either the stability or assembly of the cytochrome b6-f complex. The sequence is that of Cytochrome b6-f complex subunit 5 from Prochlorococcus marinus (strain NATL1A).